Reading from the N-terminus, the 134-residue chain is Profilin-1 (134 aa).

Belongs to the profilin family. Occurs in many kinds of cells as a complex with monomeric actin in a 1:1 ratio.

Its subcellular location is the cytoplasm. It localises to the cytoskeleton. Binds to actin and affects the structure of the cytoskeleton. At high concentrations, profilin prevents the polymerization of actin, whereas it enhances it at low concentrations. By binding to PIP2, it inhibits the formation of IP3 and DG. This Nicotiana tabacum (Common tobacco) protein is Profilin-1 (PRO1).